A 789-amino-acid chain; its full sequence is Homocitrate dehydratase, mitochondrial (789 aa).

Residues 1–14 (MLSSANRFYIKRHL) constitute a mitochondrion transit peptide. Substrate-binding positions include Q96 and 189 to 191 (DSH). C385, C448, and C451 together coordinate [4Fe-4S] cluster. Substrate-binding positions include R476, R481, K610, and 672–673 (AR).

This sequence belongs to the aconitase/IPM isomerase family. [4Fe-4S] cluster is required as a cofactor.

Its subcellular location is the mitochondrion. It catalyses the reaction (2R)-homocitrate = cis-homoaconitate + H2O. It functions in the pathway amino-acid biosynthesis; L-lysine biosynthesis via AAA pathway; L-alpha-aminoadipate from 2-oxoglutarate: step 2/5. In terms of biological role, catalyzes the reversible dehydration of (R)-homocitrate to cis-homoaconitate, a step in the alpha-aminoadipate pathway for lysine biosynthesis. This Saccharomyces cerevisiae (strain ATCC 204508 / S288c) (Baker's yeast) protein is Homocitrate dehydratase, mitochondrial (ACO2).